A 295-amino-acid chain; its full sequence is Transcription factor bHLH19 (295 aa).

The 50-residue stretch at 115 to 164 folds into the bHLH domain; that stretch reads VLAKEHVLAERKRREKLSEKFIALSALLPGLKKADKVTILDDAISRMKQL.

Homodimer. In terms of tissue distribution, expressed in roots and leaves.

The protein localises to the nucleus. The polypeptide is Transcription factor bHLH19 (BHLH19) (Arabidopsis thaliana (Mouse-ear cress)).